The chain runs to 440 residues: MFIILKFLISFFLICNFFNYNDHFASGQTLPPGFCPSPLIYRNSTNRQNDIENGYLFIGQTNCTSPCPSLIFSENEWHRVYNMSLIAGTISMFALIFLIITYSPLVNKYNGYTRHTVGILFLFCGIFLTVTTDGRQLWDIDLGFEKYCPEPGRFARQSDTKCLVTAIFFQYGCVTSILWWAAISVDLWMTIRKVKISKLQFITYAVILNIITLILTFAPIASKQYGYGEAAIGCWLMDLKYQVGYFWAPVGFCLCVGCVSIVLIIREIYKVSDAIKKKLLAKHLKPLMLIILMLSEFIYMFIFYSYTTSRRGHYHDVVEKYIRCLFINASNPSICEVDVSISSPAHFFFHFCMRLMGIEGLIFFGFTRQTKRIWLRSFWLNNSFIKKLIPSLSSISSDEKTSNSSHRTTRGCRETEFGESIEQSNDPEHFIELSGVDSKN.

An N-terminal signal peptide occupies residues 1 to 27 (MFIILKFLISFFLICNFFNYNDHFASG). Topologically, residues 28–85 (QTLPPGFCPSPLIYRNSTNRQNDIENGYLFIGQTNCTSPCPSLIFSENEWHRVYNMSL) are extracellular. 3 N-linked (GlcNAc...) asparagine glycosylation sites follow: N43, N62, and N82. Residues 86-106 (IAGTISMFALIFLIITYSPLV) form a helical membrane-spanning segment. Residues 107-110 (NKYN) are Cytoplasmic-facing. The chain crosses the membrane as a helical span at residues 111–131 (GYTRHTVGILFLFCGIFLTVT). Over 132-162 (TDGRQLWDIDLGFEKYCPEPGRFARQSDTKC) the chain is Extracellular. The chain crosses the membrane as a helical span at residues 163 to 183 (LVTAIFFQYGCVTSILWWAAI). Residues 184–200 (SVDLWMTIRKVKISKLQ) lie on the Cytoplasmic side of the membrane. The helical transmembrane segment at 201-221 (FITYAVILNIITLILTFAPIA) threads the bilayer. Residues 222–244 (SKQYGYGEAAIGCWLMDLKYQVG) are Extracellular-facing. The helical transmembrane segment at 245–265 (YFWAPVGFCLCVGCVSIVLII) threads the bilayer. The Cytoplasmic portion of the chain corresponds to 266–285 (REIYKVSDAIKKKLLAKHLK). The helical transmembrane segment at 286-306 (PLMLIILMLSEFIYMFIFYSY) threads the bilayer. The Extracellular portion of the chain corresponds to 307-346 (TTSRRGHYHDVVEKYIRCLFINASNPSICEVDVSISSPAH). The N-linked (GlcNAc...) asparagine glycan is linked to N328. A helical membrane pass occupies residues 347 to 367 (FFFHFCMRLMGIEGLIFFGFT). Residues 368–440 (RQTKRIWLRS…IELSGVDSKN (73 aa)) lie on the Cytoplasmic side of the membrane. The interval 395–428 (ISSDEKTSNSSHRTTRGCRETEFGESIEQSNDPE) is disordered.

This sequence belongs to the G-protein coupled receptor Fz/Smo family.

The protein resides in the membrane. The chain is Frizzled/smoothened-like sans CRD protein D (fscD) from Dictyostelium discoideum (Social amoeba).